The following is a 127-amino-acid chain: MRRNSKERKNRATRRSQGSYQEIIGRTWIFRGAHRGRVTRRNIIWHELIGLRVRIVGSTHPAFVGIEGYVIDETRNMLVIAGDRIWKVPKDVCIFEFEADDGTKIKIPGERLVGRPEMRLKKRWKKW.

This sequence belongs to the eukaryotic/archaeal RNase P protein component 1 family. Consists of a catalytic RNA component and at least 5 protein subunits. Forms a heterodimeric subcomplex with Rnp4. Reconstituted enzyme missing individual protein subunits is suboptimally active, showing each subunit contributes to optimization of activity.

Its subcellular location is the cytoplasm. It catalyses the reaction Endonucleolytic cleavage of RNA, removing 5'-extranucleotides from tRNA precursor.. In terms of biological role, part of ribonuclease P (RNase P), a protein complex that generates mature tRNA molecules by cleaving their 5'-ends. Binds RNase P RNA. The sequence is that of Ribonuclease P protein component 1 from Pyrococcus horikoshii (strain ATCC 700860 / DSM 12428 / JCM 9974 / NBRC 100139 / OT-3).